A 365-amino-acid polypeptide reads, in one-letter code: DNA replication and repair protein RecF (365 aa).

30 to 37 contacts ATP; that stretch reads GQNGSGKT.

The protein belongs to the RecF family.

It localises to the cytoplasm. Functionally, the RecF protein is involved in DNA metabolism; it is required for DNA replication and normal SOS inducibility. RecF binds preferentially to single-stranded, linear DNA. It also seems to bind ATP. The sequence is that of DNA replication and repair protein RecF from Shewanella halifaxensis (strain HAW-EB4).